Reading from the N-terminus, the 528-residue chain is Probable protein phosphatase 2C 51 (528 aa).

Residues 8–28 (SLLNLGLLIIFFVFFFLVINC) traverse the membrane as a helical segment. The PPM-type phosphatase domain occupies 71-445 (RCHTAAIQGR…DNMAAVVVPL (375 aa)). Asp-117, Gly-118, Asp-385, and Asp-436 together coordinate Mn(2+).

This sequence belongs to the PP2C family. It depends on Mg(2+) as a cofactor. Mn(2+) is required as a cofactor.

The protein resides in the membrane. The catalysed reaction is O-phospho-L-seryl-[protein] + H2O = L-seryl-[protein] + phosphate. It carries out the reaction O-phospho-L-threonyl-[protein] + H2O = L-threonyl-[protein] + phosphate. This chain is Probable protein phosphatase 2C 51, found in Arabidopsis thaliana (Mouse-ear cress).